Reading from the N-terminus, the 174-residue chain is Shikimate kinase (174 aa).

14–19 is an ATP binding site; sequence GAGKST. Ser-18 contributes to the Mg(2+) binding site. Positions 36, 60, and 82 each coordinate substrate. Residue Arg-120 coordinates ATP. Residue Arg-141 participates in substrate binding. Residue Arg-158 coordinates ATP.

The protein belongs to the shikimate kinase family. Monomer. Mg(2+) is required as a cofactor.

It localises to the cytoplasm. The enzyme catalyses shikimate + ATP = 3-phosphoshikimate + ADP + H(+). It participates in metabolic intermediate biosynthesis; chorismate biosynthesis; chorismate from D-erythrose 4-phosphate and phosphoenolpyruvate: step 5/7. Functionally, catalyzes the specific phosphorylation of the 3-hydroxyl group of shikimic acid using ATP as a cosubstrate. This chain is Shikimate kinase, found in Buchnera aphidicola subsp. Baizongia pistaciae (strain Bp).